The chain runs to 417 residues: Serine--tRNA ligase (417 aa).

Residue 225 to 227 (TLE) coordinates L-serine. ATP is bound at residue 256 to 258 (RQE). E279 is a binding site for L-serine. 343–346 (EVSS) is an ATP binding site. Residue T379 coordinates L-serine.

The protein belongs to the class-II aminoacyl-tRNA synthetase family. Type-1 seryl-tRNA synthetase subfamily. As to quaternary structure, homodimer. The tRNA molecule binds across the dimer.

The protein localises to the cytoplasm. It carries out the reaction tRNA(Ser) + L-serine + ATP = L-seryl-tRNA(Ser) + AMP + diphosphate + H(+). The catalysed reaction is tRNA(Sec) + L-serine + ATP = L-seryl-tRNA(Sec) + AMP + diphosphate + H(+). It functions in the pathway aminoacyl-tRNA biosynthesis; selenocysteinyl-tRNA(Sec) biosynthesis; L-seryl-tRNA(Sec) from L-serine and tRNA(Sec): step 1/1. In terms of biological role, catalyzes the attachment of serine to tRNA(Ser). Is also able to aminoacylate tRNA(Sec) with serine, to form the misacylated tRNA L-seryl-tRNA(Sec), which will be further converted into selenocysteinyl-tRNA(Sec). This is Serine--tRNA ligase from Mycoplasma genitalium (strain ATCC 33530 / DSM 19775 / NCTC 10195 / G37) (Mycoplasmoides genitalium).